Consider the following 236-residue polypeptide: Leucyl/phenylalanyl-tRNA--protein transferase (236 aa).

The protein belongs to the L/F-transferase family.

Its subcellular location is the cytoplasm. It catalyses the reaction N-terminal L-lysyl-[protein] + L-leucyl-tRNA(Leu) = N-terminal L-leucyl-L-lysyl-[protein] + tRNA(Leu) + H(+). The enzyme catalyses N-terminal L-arginyl-[protein] + L-leucyl-tRNA(Leu) = N-terminal L-leucyl-L-arginyl-[protein] + tRNA(Leu) + H(+). It carries out the reaction L-phenylalanyl-tRNA(Phe) + an N-terminal L-alpha-aminoacyl-[protein] = an N-terminal L-phenylalanyl-L-alpha-aminoacyl-[protein] + tRNA(Phe). Functions in the N-end rule pathway of protein degradation where it conjugates Leu, Phe and, less efficiently, Met from aminoacyl-tRNAs to the N-termini of proteins containing an N-terminal arginine or lysine. This chain is Leucyl/phenylalanyl-tRNA--protein transferase, found in Shewanella pealeana (strain ATCC 700345 / ANG-SQ1).